A 206-amino-acid chain; its full sequence is Large ribosomal subunit protein uL4 (206 aa).

Positions 45-78 (QGNRAQKDREQVKHTTKKPWRQKGTGRARAGMSS) are disordered. The span at 58–70 (HTTKKPWRQKGTG) shows a compositional bias: basic residues.

This sequence belongs to the universal ribosomal protein uL4 family. In terms of assembly, part of the 50S ribosomal subunit.

In terms of biological role, one of the primary rRNA binding proteins, this protein initially binds near the 5'-end of the 23S rRNA. It is important during the early stages of 50S assembly. It makes multiple contacts with different domains of the 23S rRNA in the assembled 50S subunit and ribosome. Its function is as follows. Forms part of the polypeptide exit tunnel. This chain is Large ribosomal subunit protein uL4, found in Burkholderia ambifaria (strain MC40-6).